The chain runs to 127 residues: Histone H2B type 1-A (127 aa).

Proline 2 carries the N-acetylproline modification. An N6-acetyllysine; alternate mark is found at lysine 7, lysine 13, lysine 14, lysine 17, lysine 18, lysine 22, and lysine 25. 8 positions are modified to N6-crotonyllysine; alternate: lysine 7, lysine 13, lysine 14, lysine 17, lysine 18, lysine 22, lysine 25, and lysine 36. Lysine 7 and lysine 13 each carry N6-lactoyllysine; alternate. Lysine 7 is covalently cross-linked (Glycyl lysine isopeptide (Lys-Gly) (interchain with G-Cter in SUMO2); alternate). An N6-lactoyllysine; alternate mark is found at lysine 17, lysine 18, lysine 22, and lysine 25. Lysine 22 participates in a covalent cross-link: Glycyl lysine isopeptide (Lys-Gly) (interchain with G-Cter in SUMO2); alternate. Position 36 is an N6-succinyllysine; alternate (lysine 36). Lysine 36 participates in a covalent cross-link: Glycyl lysine isopeptide (Lys-Gly) (interchain with G-Cter in ubiquitin); alternate. Residue serine 38 is modified to Phosphoserine. Lysine 45 is modified (N6-lactoyllysine; alternate). Position 48 is an N6-methyllysine (lysine 48). An N6,N6-dimethyllysine modification is found at lysine 59. A Dimethylated arginine modification is found at arginine 81. Lysine 87 is subject to N6-acetyllysine; alternate. Lysine 87 carries the N6-lactoyllysine; alternate modification. The residue at position 87 (lysine 87) is an N6,N6,N6-trimethyllysine; alternate. Omega-N-methylarginine is present on residues arginine 88 and arginine 94. Lysine 110 is subject to N6-lactoyllysine; alternate. An N6-methyllysine modification is found at lysine 110. The residue at position 117 (threonine 117) is a Phosphothreonine. An N6-lactoyllysine; alternate mark is found at lysine 118 and lysine 122. An N6-succinyllysine; alternate mark is found at lysine 118 and lysine 122. Lysine 118 is modified (N6-methylated lysine; alternate). Residue lysine 122 forms a Glycyl lysine isopeptide (Lys-Gly) (interchain with G-Cter in ubiquitin); alternate linkage.

Belongs to the histone H2B family. As to quaternary structure, the nucleosome is a histone octamer containing two molecules each of H2A, H2B, H3 and H4 assembled in one H3-H4 heterotetramer and two H2A-H2B heterodimers. Interacts with H2AB1; preferentially dimerizes with H2AB1 to form nucleosomes. In terms of processing, monoubiquitination at Lys-36 by the MSL1/MSL2 dimer is required for histone H3 'Lys-4' (H3K4me) and 'Lys-79' (H3K79me) methylation and transcription activation at specific gene loci, such as HOXA9 and MEIS1 loci. Similarly, monoubiquitination of Lys-122 (H2BK120Ub) by the RNF20/40 complex gives a specific tag for epigenetic transcriptional activation and is also prerequisite for histone H3 'Lys-4' and 'Lys-79' methylation. It also functions cooperatively with the FACT dimer to stimulate elongation by RNA polymerase II. H2BK120Ub also acts as a regulator of mRNA splicing: deubiquitination by USP49 is required for efficient cotranscriptional splicing of a large set of exons. Post-translationally, crotonylation (Kcr) is specifically present in male germ cells and marks testis-specific genes in post-meiotic cells, including X-linked genes that escape sex chromosome inactivation in haploid cells. Crotonylation marks active promoters and enhancers and confers resistance to transcriptional repressors. It is also associated with post-meiotically activated genes on autosomes. Acetylated during spermatogenesis. Acetylated form is most abundant in spermatogonia compared to spermatocytes and round spermatids. In terms of processing, phosphorylated at Thr-117 in spermatogonia, spermatocytes and round spermatids. Post-translationally, methylated at Lys-118 in spermatogonia, spermatocytes and round spermatids. Lactylated in macrophages by EP300/P300 by using lactoyl-CoA directly derived from endogenous or exogenous lactate, leading to stimulates gene transcription. In terms of tissue distribution, mainly expressed in testis, and the corresponding protein is also present in mature sperm. Also present in metaphase oocytes (at protein level).

The protein localises to the nucleus. It is found in the chromosome. In terms of biological role, variant histone specifically required to direct the transformation of dissociating nucleosomes to protamine in male germ cells. Entirely replaces classical histone H2B prior nucleosome to protamine transition and probably acts as a nucleosome dissociating factor that creates a more dynamic chromatin, facilitating the large-scale exchange of histones. In condensing spermatids, the heterodimer between H2AB1 and H2BC1/TH2B is loaded onto the nucleosomes and promotes loading of transition proteins (TNP1 and TNP2) onto the nucleosomes. Inclusion of the H2AB1-H2BC1/TH2B dimer into chromatin opens the nucleosomes, releasing the nucleosomal DNA ends and allowing the invasion of nucleosomes by transition proteins (TNP1 and TNP2). Then, transition proteins drive the recruitment and processing of protamines, which are responsible for histone eviction. Also expressed maternally and is present in the female pronucleus, suggesting a similar role in protamine replacement by nucleosomes at fertilization. Core component of nucleosome. Nucleosomes wrap and compact DNA into chromatin, limiting DNA accessibility to the cellular machineries which require DNA as a template. Histones thereby play a central role in transcription regulation, DNA repair, DNA replication and chromosomal stability. DNA accessibility is regulated via a complex set of post-translational modifications of histones, also called histone code, and nucleosome remodeling. The protein is Histone H2B type 1-A of Mus musculus (Mouse).